Reading from the N-terminus, the 89-residue chain is uncharacterized protein (89 aa).

The disordered stretch occupies residues 66–89 (RIKEQSSSSSATRTTQEPSLHLPD).

This is an uncharacterized protein from Cestrum parqui (CmYLCV).